Consider the following 222-residue polypeptide: Translation initiation factor 6 (222 aa).

Belongs to the eIF-6 family.

Functionally, binds to the 50S ribosomal subunit and prevents its association with the 30S ribosomal subunit to form the 70S initiation complex. In Methanothermobacter thermautotrophicus (strain ATCC 29096 / DSM 1053 / JCM 10044 / NBRC 100330 / Delta H) (Methanobacterium thermoautotrophicum), this protein is Translation initiation factor 6.